A 391-amino-acid polypeptide reads, in one-letter code: Na(+)/H(+) antiporter NhaA (391 aa).

The next 11 helical transmembrane spans lie at Ala-14–Leu-34, Phe-47–Ile-67, Ile-87–Phe-107, Gly-117–Gly-137, Val-146–Phe-166, Leu-171–Ala-191, Ala-205–Ile-225, Val-252–Val-272, Met-280–Phe-300, Phe-318–Ile-338, and Leu-356–Ser-376.

This sequence belongs to the NhaA Na(+)/H(+) (TC 2.A.33) antiporter family.

The protein resides in the cell inner membrane. The enzyme catalyses Na(+)(in) + 2 H(+)(out) = Na(+)(out) + 2 H(+)(in). Na(+)/H(+) antiporter that extrudes sodium in exchange for external protons. This is Na(+)/H(+) antiporter NhaA from Vibrio campbellii (strain ATCC BAA-1116).